A 119-amino-acid polypeptide reads, in one-letter code: Large ribosomal subunit protein uL24 (119 aa).

This sequence belongs to the universal ribosomal protein uL24 family. As to quaternary structure, part of the 50S ribosomal subunit.

One of two assembly initiator proteins, it binds directly to the 5'-end of the 23S rRNA, where it nucleates assembly of the 50S subunit. In terms of biological role, located at the polypeptide exit tunnel on the outside of the subunit. In Saccharolobus solfataricus (strain ATCC 35092 / DSM 1617 / JCM 11322 / P2) (Sulfolobus solfataricus), this protein is Large ribosomal subunit protein uL24.